We begin with the raw amino-acid sequence, 72 residues long: Caerin-regulated peptide (72 aa).

Residues 1–22 form the signal peptide; sequence MAFLKKSLLLVLFLGLVSLSIC. Residues 23–43 constitute a propeptide that is removed on maturation; sequence DEEKRENEDEEEQEDDEQSEE. Positions 24–46 are disordered; that stretch reads EEKRENEDEEEQEDDEQSEEKRG. Residues 30–41 show a composition bias toward acidic residues; it reads EDEEEQEDDEQS.

Expressed by the skin glands.

It localises to the secreted. Has antibacterial activity against Gram-positive bacterium M.luteus NCT C2665 and against Gram-negative bacterium E.coli K12D31. The polypeptide is Caerin-regulated peptide (Agalychnis callidryas (Red-eyed tree frog)).